The chain runs to 883 residues: Alanine--tRNA ligase (883 aa).

Zn(2+) is bound by residues histidine 560, histidine 564, cysteine 665, and histidine 669.

Belongs to the class-II aminoacyl-tRNA synthetase family. Zn(2+) serves as cofactor.

Its subcellular location is the cytoplasm. The catalysed reaction is tRNA(Ala) + L-alanine + ATP = L-alanyl-tRNA(Ala) + AMP + diphosphate. In terms of biological role, catalyzes the attachment of alanine to tRNA(Ala) in a two-step reaction: alanine is first activated by ATP to form Ala-AMP and then transferred to the acceptor end of tRNA(Ala). Also edits incorrectly charged Ser-tRNA(Ala) and Gly-tRNA(Ala) via its editing domain. This is Alanine--tRNA ligase from Mesomycoplasma hyopneumoniae (strain 7448) (Mycoplasma hyopneumoniae).